The primary structure comprises 297 residues: Small ribosomal subunit protein uS9m (297 aa).

The tract at residues 278 to 297 (VERKKPGKRKARKMPTWVKR) is disordered.

Belongs to the universal ribosomal protein uS9 family.

The protein resides in the mitochondrion. The polypeptide is Small ribosomal subunit protein uS9m (MRPS9) (Kluyveromyces lactis (strain ATCC 8585 / CBS 2359 / DSM 70799 / NBRC 1267 / NRRL Y-1140 / WM37) (Yeast)).